The following is a 1575-amino-acid chain: Ras GTPase-activating-like protein IQGAP2 (1575 aa).

At serine 16 the chain carries Phosphoserine. The Calponin-homology (CH) domain maps to leucine 41 to leucine 156. Threonine 356 carries the phosphothreonine modification. In terms of domain architecture, WW spans valine 594–serine 627. 3 positions are modified to phosphoserine: serine 595, serine 599, and serine 685. IQ domains are found at residues glutamine 690–aspartate 719, asparagine 720–aspartate 749, and histidine 750–proline 779. At threonine 716 the chain carries Phosphothreonine. Phosphothreonine occurs at positions 782, 881, 1002, and 1269. A Ras-GAP domain is found at tyrosine 933–alanine 1182. Phosphoserine is present on residues serine 1271, serine 1279, serine 1358, and serine 1461.

Isoform 2 expression is enhanced in testis.

Binds to activated CDC42 and RAC1 but does not seem to stimulate their GTPase activity. Associates with calmodulin. In Homo sapiens (Human), this protein is Ras GTPase-activating-like protein IQGAP2 (IQGAP2).